A 720-amino-acid polypeptide reads, in one-letter code: F-box/LRR-repeat MAX2 homolog (720 aa).

The 47-residue stretch at 14-60 (SSAILDLPEPLLLHILSFLTDVRSRHRAALACGRMRAAERATRSELS) folds into the F-box domain. LRR repeat units lie at residues 71 to 134 (LFLS…QNAF), 135 to 158 (IAAR…DPTT), 159 to 189 (LANL…PDGA), 190 to 218 (DLEP…DVVR), 219 to 247 (ALTT…FKSS), 248 to 279 (ELGP…VGDD), 280 to 316 (ALLS…ITVA), 317 to 344 (GLVA…EAAP), 345 to 372 (AMEA…KASW), 373 to 398 (LHLD…LTDA), 399 to 435 (SLAA…TLRP), 436 to 452 (TLKE…HTAE), 453 to 510 (CLTA…KCRY), 511 to 537 (MEFD…LLSP), 538 to 571 (LISA…PRTI), 572 to 606 (FGLS…GQMD), 607 to 644 (LSLW…SLTL), and 645 to 720 (PAVG…QIDD).

Associates to a SCF (SKP1-CUL1-F-box protein) E3 ubiquitin-protein ligase complex. Interacts with D14 in a strigolactone-dependent manner. Interacts with SKP1, SKP5 and SKP20. As to expression, expressed in leaves. Expressed in roots, culms, leaf blades, leaf sheaths, shoot bases and panicles.

The protein localises to the nucleus. Functionally, involved in strigolactone (SL) signaling. Required for responses to SLs and the establishment of arbuscular mycorrhiza symbiosis in rice. Strigolactone-dependent association of D3 with D14 and D53 (a repressor of SL signaling) triggers D53 ubiquitination and degradation. Controls tillering by suppressing axillary bud activity. Tiller is a specialized grain-bearing branch that is formed on the unelongated basal internode and grows independently of the mother stem (culm) by means of its own adventitious roots. The chain is F-box/LRR-repeat MAX2 homolog from Oryza sativa subsp. japonica (Rice).